The chain runs to 129 residues: Ferredoxin-1 (129 aa).

In terms of domain architecture, 2Fe-2S ferredoxin-type spans 29 to 120 (SDMDLDDEDY…EVKIVYNAKH (92 aa)). [2Fe-2S] cluster is bound by residues Cys-64, Cys-69, Cys-72, and Cys-103.

Belongs to the 2Fe2S plant-type ferredoxin family. It depends on [2Fe-2S] cluster as a cofactor.

Its function is as follows. Ferredoxins are iron-sulfur proteins that transfer electrons in a wide variety of metabolic reactions. The chain is Ferredoxin-1 (fer1) from Haloarcula marismortui (strain ATCC 43049 / DSM 3752 / JCM 8966 / VKM B-1809) (Halobacterium marismortui).